Here is a 127-residue protein sequence, read N- to C-terminus: Histidine-containing phosphotransfer protein 4 (127 aa).

The HPt domain occupies 27 to 122 (NPNFVEEVSA…STLRKKLEHY (96 aa)). The residue at position 68 (histidine 68) is a Phosphohistidine.

In terms of assembly, interacts with the B-type response regulators ARR1 and ARR2. Two-component system major event consists of a His-to-Asp phosphorelay between a sensor histidine kinase (HK) and a response regulator (RR). In plants, the His-to-Asp phosphorelay involves an additional intermediate named Histidine-containing phosphotransfer protein (HPt). This multistep phosphorelay consists of a His-Asp-His-Asp sequential transfer of a phosphate group between first a His and an Asp of the HK protein, followed by the transfer to a conserved His of the HPt protein and finally the transfer to an Asp in the receiver domain of the RR protein. As to expression, predominantly expressed in aerial parts of the plant.

The protein resides in the cytoplasm. The protein localises to the cytosol. Its subcellular location is the nucleus. In terms of biological role, functions as a two-component phosphorelay mediator between cytokinin sensor histidine kinases and response regulators (B-type ARRs). Plays an important role in propagating cytokinin signal transduction through the multistep His-to-Asp phosphorelay. This is Histidine-containing phosphotransfer protein 4 (AHP4) from Arabidopsis thaliana (Mouse-ear cress).